Reading from the N-terminus, the 252-residue chain is Ribosomal RNA small subunit methyltransferase J (252 aa).

S-adenosyl-L-methionine-binding positions include 101 to 102 (RD), 117 to 118 (ER), 153 to 154 (SS), and Asp-171.

It belongs to the methyltransferase superfamily. RsmJ family.

It is found in the cytoplasm. The catalysed reaction is guanosine(1516) in 16S rRNA + S-adenosyl-L-methionine = N(2)-methylguanosine(1516) in 16S rRNA + S-adenosyl-L-homocysteine + H(+). In terms of biological role, specifically methylates the guanosine in position 1516 of 16S rRNA. In Salmonella dublin (strain CT_02021853), this protein is Ribosomal RNA small subunit methyltransferase J.